We begin with the raw amino-acid sequence, 469 residues long: Putative diacyglycerol O-acyltransferase MT0231 (469 aa).

Residue His-139 is the Proton acceptor of the active site.

The protein belongs to the long-chain O-acyltransferase family.

It carries out the reaction an acyl-CoA + a 1,2-diacyl-sn-glycerol = a triacyl-sn-glycerol + CoA. It functions in the pathway glycerolipid metabolism; triacylglycerol biosynthesis. The protein is Putative diacyglycerol O-acyltransferase MT0231 of Mycobacterium tuberculosis (strain CDC 1551 / Oshkosh).